The primary structure comprises 502 residues: Maturase K (502 aa).

Belongs to the intron maturase 2 family. MatK subfamily.

It is found in the plastid. Its subcellular location is the chloroplast. In terms of biological role, usually encoded in the trnK tRNA gene intron. Probably assists in splicing its own and other chloroplast group II introns. Binds its homologous trnK precursor transcript. The chain is Maturase K from Sinapis alba (White mustard).